Consider the following 118-residue polypeptide: Large ribosomal subunit protein bL20 (118 aa).

The protein belongs to the bacterial ribosomal protein bL20 family.

Its function is as follows. Binds directly to 23S ribosomal RNA and is necessary for the in vitro assembly process of the 50S ribosomal subunit. It is not involved in the protein synthesizing functions of that subunit. This Lactobacillus johnsonii (strain CNCM I-12250 / La1 / NCC 533) protein is Large ribosomal subunit protein bL20.